Here is a 263-residue protein sequence, read N- to C-terminus: Small ribosomal subunit protein eS4, Y isoform 2 (263 aa).

An S4 RNA-binding domain is found at 42–104 (LPLIVFLRNR…TGEHFRLVYD (63 aa)).

This sequence belongs to the eukaryotic ribosomal protein eS4 family.

This Pan troglodytes (Chimpanzee) protein is Small ribosomal subunit protein eS4, Y isoform 2 (RPS4Y2).